Consider the following 345-residue polypeptide: MNPYILSIMLISLGLGTTLTFASSNWLLAWMGLEINTLAIIPLMANNHHPRAVEAATKYFITQAAAAALLLFSSLINAWQSGQWMIQDMSMPMSALMTIAIAIKLGVAPVHFWLPEVMQGIKLNTGLILATWQKLAPLALLYQISNNLMPELMIALGLMSTIVGGWGGLNQTQIRKIMAYSSIAHLGWIISIMHFMPSLAIINLIMYIIMTTTMFMIFNTLNSTTINALAINWSKFPALSAITMLALLSLGGLPPLSGFLPKWLILQELTNQNLALTATVMALSALLSLYFYLRLSYSLTTTIMPNTYQHMLNWNIKTKITFILPTMMIMTIAMLPISPSIISMF.

10 helical membrane passes run 3–23, 25–45, 59–79, 95–115, 148–168, 177–196, 201–223, 236–256, 273–293, and 322–342; these read PYIL…TFAS, NWLL…PLMA, YFIT…INAW, ALMT…FWLP, LMPE…GWGG, IMAY…MHFM, IINL…TLNS, FPAL…LPPL, NLAL…YFYL, and FILP…PSII.

Belongs to the complex I subunit 2 family.

The protein localises to the mitochondrion inner membrane. It catalyses the reaction a ubiquinone + NADH + 5 H(+)(in) = a ubiquinol + NAD(+) + 4 H(+)(out). Core subunit of the mitochondrial membrane respiratory chain NADH dehydrogenase (Complex I) that is believed to belong to the minimal assembly required for catalysis. Complex I functions in the transfer of electrons from NADH to the respiratory chain. The immediate electron acceptor for the enzyme is believed to be ubiquinone. The protein is NADH-ubiquinone oxidoreductase chain 2 (MT-ND2) of Polypterus ornatipinnis (Ornate bichir).